The sequence spans 435 residues: Homogentisate 1,2-dioxygenase (435 aa).

His-289 functions as the Proton acceptor in the catalytic mechanism. Fe cation-binding residues include His-332 and Glu-338. Positions 347 and 368 each coordinate homogentisate. Residue His-368 coordinates Fe cation.

Belongs to the homogentisate dioxygenase family. Hexamer; dimer of trimers. Fe cation is required as a cofactor.

It carries out the reaction homogentisate + O2 = 4-maleylacetoacetate + H(+). It participates in amino-acid degradation; L-phenylalanine degradation; acetoacetate and fumarate from L-phenylalanine: step 4/6. In terms of biological role, involved in the catabolism of homogentisate (2,5-dihydroxyphenylacetate or 2,5-OH-PhAc), a central intermediate in the degradation of phenylalanine and tyrosine. Catalyzes the oxidative ring cleavage of the aromatic ring of homogentisate to yield maleylacetoacetate. The protein is Homogentisate 1,2-dioxygenase of Pseudomonas savastanoi pv. phaseolicola (strain 1448A / Race 6) (Pseudomonas syringae pv. phaseolicola (strain 1448A / Race 6)).